Consider the following 294-residue polypeptide: Proline iminopeptidase (294 aa).

Residues 27-277 (PPLVLLHGGP…GCGHMSFVEK (251 aa)) enclose the AB hydrolase-1 domain. Catalysis depends on serine 105, which acts as the Nucleophile. The active site involves aspartate 244. Histidine 271 functions as the Proton donor in the catalytic mechanism.

The protein belongs to the peptidase S33 family.

The protein localises to the cell envelope. It catalyses the reaction Release of N-terminal proline from a peptide.. In terms of biological role, releases the N-terminal proline from various substrates. The protein is Proline iminopeptidase of Lactobacillus helveticus (strain DPC 4571).